A 613-amino-acid polypeptide reads, in one-letter code: Probable LRR receptor-like serine/threonine-protein kinase At5g10290 (613 aa).

The signal sequence occupies residues 1 to 31; that stretch reads MRMFSLQKMAMAFTLLFFACLCSFVSPDAQG. The Extracellular segment spans residues 32-225; that stretch reads DALFALRISL…SGDSSKPKTG (194 aa). Asn-81 and Asn-116 each carry an N-linked (GlcNAc...) asparagine glycan. LRR repeat units lie at residues 95 to 117, 119 to 141, 143 to 166, and 167 to 189; these read NLKT…FGNL, SLTS…IGNL, KLQF…TGLP, and NLLN…LFEI. The N-linked (GlcNAc...) asparagine glycan is linked to Asn-155. An N-linked (GlcNAc...) asparagine glycan is attached at Asn-193. Residues 226–246 form a helical membrane-spanning segment; sequence IIAGVVAGVTVVLFGILLFLF. Over 247–613 the chain is Cytoplasmic; it reads CKDRHKGYRR…QDAIELSGGR (367 aa). Residue Thr-287 is modified to Phosphothreonine. The 280-residue stretch at 290 to 569 folds into the Protein kinase domain; sequence FSEKNVLGQG…VVRMLEGEGL (280 aa). 296 to 304 is a binding site for ATP; it reads LGQGGFGKV. Position 313 is a phosphothreonine (Thr-313). Lys-318 is an ATP binding site. Phosphoserine is present on Ser-371. Position 390 is a phosphothreonine (Thr-390). Catalysis depends on Asp-417, which acts as the Proton acceptor. Phosphothreonine is present on residues Thr-450, Thr-451, and Thr-456. At Tyr-464 the chain carries Phosphotyrosine. Residue Ser-466 is modified to Phosphoserine. The residue at position 467 (Thr-467) is a Phosphothreonine. At Ser-471 the chain carries Phosphoserine. Position 547 is a phosphothreonine (Thr-547).

Belongs to the protein kinase superfamily. Ser/Thr protein kinase family.

It is found in the cell membrane. The enzyme catalyses L-seryl-[protein] + ATP = O-phospho-L-seryl-[protein] + ADP + H(+). It carries out the reaction L-threonyl-[protein] + ATP = O-phospho-L-threonyl-[protein] + ADP + H(+). This chain is Probable LRR receptor-like serine/threonine-protein kinase At5g10290, found in Arabidopsis thaliana (Mouse-ear cress).